The chain runs to 270 residues: Ribosomal RNA-processing protein 7 homolog (270 aa).

Residues 233 to 268 (TFQIKKNRQEKAQELLKKFEEDRKRITQLKQARNFK) adopt a coiled-coil conformation.

The protein belongs to the RRP7 family.

The sequence is that of Ribosomal RNA-processing protein 7 homolog from Caenorhabditis elegans.